The primary structure comprises 629 residues: MQLVQLANFVLDNLVQSRIGFIVLFHCWQSDESLKFAEQFMKPIHPILVYHQFVQMRGVLNWSHLELNYMGHTQPTLAIYVDIKCDQAQDLLEEASREQIYNQHYHWLLVGNQSELEFNDLFALFNISIDADVSYVKEQIQDNNDSVAYAVYDVYNNGKIIGGQLNVTGSHEMSCDPFKCRRTRYLSSLQKRSKYGNREQLTDVVLRVATVVTXRPLTLSDDELIRFLSQENDTHIDSLARFGFHLTLILRDLLYCKMKFIFSDSWSKSDVVGGSVGAVVDQTADLTASPSLATEGRLKYLSAIIETGFFRSVCIFRTPHNAGLRGDVFLQPFSPLVWYLFGGVLSLIGVLLWITFYMECKRMQKRWRLDYLPSLLSTFLISFGAACIQSSSLIPRSAGGRLIYFALFLISFIMYNYYTSVVVSSLLSSPVKSKIKTMQQLAESSLTVGLEPLPFTKSYLNYSRLPEIHLFIKRKIESQTQNPELWLPAEQGVLRVKANPGYVYVFETSSGYAYVERYFTAQEICDLNEVLFRPEKLLYTHLHRNSTYKELFRLRFLRILETGVYRKQRSYWVHMKLHCEAQNFVITVGMEYVAPLLLMLICADILVVVILLVELAWKRFFTRPLTIHP.

Residues 1 to 335 (MQLVQLANFV…GDVFLQPFSP (335 aa)) lie on the Extracellular side of the membrane. Asn-61, Asn-112, Asn-126, Asn-144, Asn-166, and Asn-232 each carry an N-linked (GlcNAc...) asparagine glycan. The helical transmembrane segment at 336 to 356 (LVWYLFGGVLSLIGVLLWITF) threads the bilayer. The Cytoplasmic segment spans residues 357-374 (YMECKRMQKRWRLDYLPS). A helical transmembrane segment spans residues 375 to 395 (LLSTFLISFGAACIQSSSLIP). Residues 396–402 (RSAGGRL) lie on the Extracellular side of the membrane. The chain crosses the membrane as a helical span at residues 403 to 423 (IYFALFLISFIMYNYYTSVVV). Topologically, residues 424–592 (SSLLSSPVKS…NFVITVGMEY (169 aa)) are cytoplasmic. Residues 593–613 (VAPLLLMLICADILVVVILLV) traverse the membrane as a helical segment. Over 614–629 (ELAWKRFFTRPLTIHP) the chain is Extracellular.

This sequence belongs to the glutamate-gated ion channel (TC 1.A.10.1) family. Expressed in neurons in the antennal coeloconic 2 (ac2) sensillum class of sensory hairs (at protein level).

The protein localises to the cell membrane. It localises to the cell projection. Its subcellular location is the dendrite. In terms of biological role, olfactory receptor for propionic, butyric and 2-oxopentanoic acids. This Drosophila sechellia (Fruit fly) protein is Ionotropic receptor 75a.